Reading from the N-terminus, the 51-residue chain is Protein I177L (51 aa).

A glycan (N-linked (GlcNAc...) asparagine; by host) is linked at Asn-11.

Belongs to the asfivirus I177L family.

It localises to the virion. In Ornithodoros (relapsing fever ticks), this protein is Protein I177L.